The following is a 1320-amino-acid chain: Centrosomin (1320 aa).

The tract at residues 20-41 (ASFDVPRPPGGGNSPLPSQGRS) is disordered. Residues 97–516 (RKTVDVKMEL…SSQEKEIKKL (420 aa)) are a coiled coil. Basic and acidic residues predominate over residues 517–530 (NQENEQSANKENDC). Positions 517–554 (NQENEQSANKENDCAKTVISPSSSGRSMSDNEASSQEM) are disordered. Over residues 535-554 (ISPSSSGRSMSDNEASSQEM) the composition is skewed to polar residues. Position 545 is a phosphoserine (serine 545). Coiled-coil stretches lie at residues 626–654 (EADL…KVDV) and 712–983 (NSLL…LKLA). Positions 644 to 656 (RNKLLQRKVDVLF) match the Nuclear localization signal motif. The residue at position 782 (threonine 782) is a Phosphothreonine. Serine 785 is subject to Phosphoserine. Over residues 810-823 (KKELEKRRSSEGQR) the composition is skewed to basic and acidic residues. 2 disordered regions span residues 810-849 (KKEL…SEPD) and 863-893 (SNSL…NRNS). Over residues 831–843 (LPSQQFDNQSESE) the composition is skewed to polar residues. 7 positions are modified to phosphoserine: serine 874, serine 876, serine 878, serine 1191, serine 1234, serine 1237, and serine 1239. A disordered region spans residues 1220 to 1249 (VEMKTEGSASPKAKSEESTSPDSKSNVATG). Positions 1237–1247 (STSPDSKSNVA) are enriched in polar residues.

Monomer. In terms of tissue distribution, developing visceral mesoderm of the midgut, the central and peripheral nervous system, and developing gonads. Isoform J: Expressed in ovaries, testis and embryos. Isoform A: Expressed in testis only.

The protein resides in the cytoplasm. It is found in the cytoskeleton. Its subcellular location is the microtubule organizing center. The protein localises to the centrosome. It localises to the flagellum basal body. The protein resides in the perinuclear region. In terms of biological role, core component of the centrosome throughout spermatogenesis. May participate in mitotic spindle assembly and the mechanics of morphogenesis through an interaction with microtubules, either directly or indirectly. Is a target of several homeotic genes. This Drosophila melanogaster (Fruit fly) protein is Centrosomin (cnn).